Consider the following 175-residue polypeptide: Translation initiation factor IF-3 (175 aa).

It belongs to the IF-3 family. As to quaternary structure, monomer.

It is found in the cytoplasm. Its function is as follows. IF-3 binds to the 30S ribosomal subunit and shifts the equilibrium between 70S ribosomes and their 50S and 30S subunits in favor of the free subunits, thus enhancing the availability of 30S subunits on which protein synthesis initiation begins. The chain is Translation initiation factor IF-3 from Staphylococcus carnosus (strain TM300).